A 525-amino-acid chain; its full sequence is tRNA(Ile)-lysidine synthase (525 aa).

Residue 32-37 (SGGRDS) participates in ATP binding.

It belongs to the tRNA(Ile)-lysidine synthase family.

The protein resides in the cytoplasm. It catalyses the reaction cytidine(34) in tRNA(Ile2) + L-lysine + ATP = lysidine(34) in tRNA(Ile2) + AMP + diphosphate + H(+). Its function is as follows. Ligates lysine onto the cytidine present at position 34 of the AUA codon-specific tRNA(Ile) that contains the anticodon CAU, in an ATP-dependent manner. Cytidine is converted to lysidine, thus changing the amino acid specificity of the tRNA from methionine to isoleucine. The chain is tRNA(Ile)-lysidine synthase from Psychrobacter sp. (strain PRwf-1).